Here is a 1020-residue protein sequence, read N- to C-terminus: Phosphatidylinositol 3-kinase VPS34 (1020 aa).

Residues 49–210 enclose the C2 PI3K-type domain; the sequence is LSTKFEDPTV…NWLDKMVLPK (162 aa). One can recognise a PIK helical domain in the interval 331–577; sequence DKELKPTPQL…DGPIKIYMDI (247 aa). Residues 666–1004 enclose the PI3K/PI4K catalytic domain; sequence YPEESSVFKS…LINDSVNAFL (339 aa). The segment at 672–678 is G-loop; it reads VFKSSLA. The interval 873-881 is catalytic loop; sequence GVGDRHLDN. The activation loop stretch occupies residues 892-913; sequence HADFGYILGRDPKPFPPLMKLP.

The protein belongs to the PI3/PI4-kinase family. Component of the autophagy-specific VPS34 PI3-kinase complex I composed of at least VPS15, VPS30, VPS34, and of the VPS34 PI3-kinase complex II composed of VPS15, VPS30, VPS34 and VPS38. Interacts with VMNA7. In terms of processing, autophosphorylated.

It localises to the golgi apparatus. It is found in the trans-Golgi network membrane. The protein localises to the endosome membrane. It catalyses the reaction a 1,2-diacyl-sn-glycero-3-phospho-(1D-myo-inositol) + ATP = a 1,2-diacyl-sn-glycero-3-phospho-(1D-myo-inositol-3-phosphate) + ADP + H(+). Its function is as follows. Multifunctional phosphatidylinositol 3-kinase involved in acidification of vacuoles, pH-dependent cell growth, and autophagocytosis. Plays an important role in protein transport and virulence. Component of the autophagy-specific VPS34 PI3-kinase complex I essential to recruit the ATG8-phosphatidylinositol conjugate and the ATG12-ATG5 conjugate to the pre-autophagosomal structure. Also involved in endosome-to-Golgi retrograde transport as part of the VPS34 PI3-kinase complex II. This second complex is required for the endosome-to-Golgi retrieval of PEP1 and KEX2, and the recruitment of VPS5 and VPS7, two components of the retromer complex, to endosomal membranes (probably through the synthesis of a specific pool of phosphatidylinositol 3-phosphate recruiting the retromer to the endosomes). Finally, it might also be involved in ethanol tolerance and cell wall integrity. In Candida albicans (strain SC5314 / ATCC MYA-2876) (Yeast), this protein is Phosphatidylinositol 3-kinase VPS34.